Reading from the N-terminus, the 174-residue chain is Ribosome maturation factor RimM (174 aa).

One can recognise a PRC barrel domain in the interval 101–174 (AGEFYLADLC…IELLQRWILE (74 aa)).

This sequence belongs to the RimM family. As to quaternary structure, binds ribosomal protein uS19.

The protein localises to the cytoplasm. In terms of biological role, an accessory protein needed during the final step in the assembly of 30S ribosomal subunit, possibly for assembly of the head region. Essential for efficient processing of 16S rRNA. May be needed both before and after RbfA during the maturation of 16S rRNA. It has affinity for free ribosomal 30S subunits but not for 70S ribosomes. This chain is Ribosome maturation factor RimM, found in Treponema pallidum (strain Nichols).